Consider the following 273-residue polypeptide: DnaJ homolog subfamily C member 27 (273 aa).

The interval 1–18 (MEANMPKRKEPGRSLRIK) is required for interaction with MAPK1. GTP is bound by residues 23–30 (GNAEVGKS), 71–75 (DMAGH), and 134–137 (NKID). The J domain occupies 217–273 (DSWDMLGVKPGASRDEVNKAYRKLAVLLHPDKCVAPGSEDAFKAVVNARTALLKNIK).

This sequence belongs to the small GTPase superfamily. Rab family. Interacts directly with MAPK1 (wild-type and kinase-deficient forms). Interacts directly (in GTP-bound form) with MAP2K1 (wild-type and kinase-deficient forms). As to expression, overexpressed in gastrointestinal cancers; expression correlates with later tumor-node-metastasis stages of colorectal cancers.

It localises to the nucleus. Functionally, GTPase which can activate the MEK/ERK pathway and induce cell transformation when overexpressed. May act as a nuclear scaffold for MAPK1, probably by association with MAPK1 nuclear export signal leading to enhanced ERK1/ERK2 signaling. The polypeptide is DnaJ homolog subfamily C member 27 (DNAJC27) (Homo sapiens (Human)).